Reading from the N-terminus, the 371-residue chain is tRNA (guanine(26)-N(2))-dimethyltransferase (371 aa).

The region spanning 4–368 (IEVTEGRTTF…APLDAIAAAL (365 aa)) is the Trm1 methyltransferase domain. S-adenosyl-L-methionine is bound by residues R41, R66, D82, D108, and A109. Zn(2+) is bound by residues C237, C240, C256, and C259.

Belongs to the class I-like SAM-binding methyltransferase superfamily. Trm1 family.

The catalysed reaction is guanosine(26) in tRNA + 2 S-adenosyl-L-methionine = N(2)-dimethylguanosine(26) in tRNA + 2 S-adenosyl-L-homocysteine + 2 H(+). Its function is as follows. Dimethylates a single guanine residue at position 26 of a number of tRNAs using S-adenosyl-L-methionine as donor of the methyl groups. The sequence is that of tRNA (guanine(26)-N(2))-dimethyltransferase from Methanosphaerula palustris (strain ATCC BAA-1556 / DSM 19958 / E1-9c).